We begin with the raw amino-acid sequence, 130 residues long: Ribonuclease P protein component (130 aa).

The protein belongs to the RnpA family. As to quaternary structure, consists of a catalytic RNA component (M1 or rnpB) and a protein subunit.

The catalysed reaction is Endonucleolytic cleavage of RNA, removing 5'-extranucleotides from tRNA precursor.. Its function is as follows. RNaseP catalyzes the removal of the 5'-leader sequence from pre-tRNA to produce the mature 5'-terminus. It can also cleave other RNA substrates such as 4.5S RNA. The protein component plays an auxiliary but essential role in vivo by binding to the 5'-leader sequence and broadening the substrate specificity of the ribozyme. In Desulfovibrio desulfuricans (strain ATCC 27774 / DSM 6949 / MB), this protein is Ribonuclease P protein component.